A 182-amino-acid polypeptide reads, in one-letter code: uncharacterized protein (182 aa).

The next 4 helical transmembrane spans lie at Leu-19 to Ser-39, Ile-51 to Ile-71, Ile-87 to Phe-107, and Cys-118 to Cys-138.

The protein localises to the membrane. This is an uncharacterized protein from Caenorhabditis elegans.